A 127-amino-acid chain; its full sequence is Fatty acid-binding protein, liver (127 aa).

M1 is modified (N-acetylmethionine). K31 and K36 each carry N6-succinyllysine. Residue S39 is modified to Phosphoserine. N6-succinyllysine is present on K46. A Phosphoserine modification is found at S56. N6-succinyllysine occurs at positions 57, 78, and 90. At S100 the chain carries Phosphoserine. N105 is subject to Deamidated asparagine; alternate. Residues 105-106 (NG) constitute a cross-link (isoaspartyl glycine isopeptide (Asn-Gly); alternate). At K121 the chain carries N6-succinyllysine.

This sequence belongs to the calycin superfamily. Fatty-acid binding protein (FABP) family. As to quaternary structure, monomer. In terms of processing, deamidation and transpeptidation at the beta carboxyl of Asn-105 forms an isoaspartyl residue and Edman degradation appears as though blocked. This rearrangement gives rise to an extra negative charge carried by the acid form.

The protein localises to the cytoplasm. Plays a role in lipoprotein-mediated cholesterol uptake in hepatocytes. Binds cholesterol. Binds free fatty acids and their coenzyme A derivatives, bilirubin, and some other small molecules in the cytoplasm. May be involved in intracellular lipid transport. The sequence is that of Fatty acid-binding protein, liver (FABP1) from Bos taurus (Bovine).